Reading from the N-terminus, the 880-residue chain is MKNLYFRVITIVIGLYFTGIMTNASRKSNILFNSECQWNEYILTNCSFTGKCDIPVDISQTAATVDVSFNFFRVLLQSHTKKEEWKIKHLDLSNNLISKITLSPFAYLHALEVLNLSNNAIHSLSLDLLSPKSSWVKRHRSSFRNRFPLLKVLILQRNKLSDTPKGLWKLKSLQSLDLSFNGILQIGWSDFHNCLQLENLCLKSNKIFKIPPQAFKDLKKLQVIDLSNNALITILPMMIIALEFPHLVVDLADNNWQCDDSVAVFQNFISESWRKKWNVICNRSIGSEEANGGTPQSRISRETRLPPIHLHRMKSLIRSKAERPQGGRHTGISTLGKKAKAGSGLRKKQRRLPRSVRSTRDVQAAGKKEDAPQDLALAVCLSVFITFLVAFSLGAFTRPYVDRLWQKKCQSKSPGLDNAYSNEGFYDDMEAAGHTPHPETHLRQVFPHLSLYENQTPFWVTQPHPHATVIPDRTLGRSRKDPGSSQSPGQCGDNTGAGSGNDGAVYSILQRHPHAGNRELMSAAQDHIHRNDILGEWTYETVAQEEPLSAHSVGVSSVAGTSHAVSGSSRYDSNELDPSLSGEITASLCKMLTHAEAQRTGDSKERGGTEQSLWDSQMEFSKERQVSSSIDLLSIQQPRLSGARAEEALSAHYSEVPYGDPRDTGPSVFPPRWDSGLDVTPANKEPVQKSTPSDTCCELESDCDSDEGSLFTLSSISSESARSKTEEAVPDEESLQDESSGASKDNVTAVDSLEENVTFQTIPGKCKNQEDPFEKPLISAPDSGMYKTHLENASDTDRSEGLSPWPRSPGNSPLGDEFPGMFTYDYDTALQSKAAEWHCSLRDLEFSNVDVLQQTPPCSAEVPSDPDKAAFHERDSDILK.

Residues 4 to 24 (LYFRVITIVIGLYFTGIMTNA) traverse the membrane as a helical segment. Residue asparagine 45 is glycosylated (N-linked (GlcNAc...) asparagine). 6 LRR repeats span residues 86–107 (KIKHLDLSNNLISKITLSPFAY), 110–130 (ALEVLNLSNNAIHSLSLDLLS), 149–171 (LLKVLILQRNKLSDTPKGLWKLK), 172–193 (SLQSLDLSFNGILQIGWSDFHN), 196–217 (QLENLCLKSNKIFKIPPQAFKD), and 220–241 (KLQVIDLSNNALITILPMMIIA). N-linked (GlcNAc...) asparagine glycosylation is present at asparagine 115. Residues 319-368 (SKAERPQGGRHTGISTLGKKAKAGSGLRKKQRRLPRSVRSTRDVQAAGKK) form a disordered region. The span at 337–354 (KKAKAGSGLRKKQRRLPR) shows a compositional bias: basic residues. The chain crosses the membrane as a helical span at residues 376-396 (ALAVCLSVFITFLVAFSLGAF). Disordered regions lie at residues 463-504 (PHPH…NDGA) and 679-746 (VTPA…SKDN). The span at 483–493 (GSSQSPGQCGD) shows a compositional bias: polar residues. The segment covering 697 to 707 (CELESDCDSDE) has biased composition (acidic residues). A compositionally biased stretch (low complexity) spans 709-720 (SLFTLSSISSES). Serine 723 is subject to Phosphoserine. Positions 737–746 (DESSGASKDN) are enriched in polar residues. N-linked (GlcNAc...) asparagine glycosylation occurs at asparagine 746. Serine 752 bears the Phosphoserine mark. The N-linked (GlcNAc...) asparagine glycan is linked to asparagine 756. Disordered stretches follow at residues 764 to 816 (GKCK…PLGD) and 855 to 880 (TPPCSAEVPSDPDKAAFHERDSDILK). Composition is skewed to basic and acidic residues over residues 788 to 800 (THLENASDTDRSE) and 865 to 880 (DPDKAAFHERDSDILK).

The protein localises to the membrane. This is Leucine-rich repeat-containing protein 66 (LRRC66) from Homo sapiens (Human).